Consider the following 412-residue polypeptide: Probable beta-1,4-xylosyltransferase IRX10 (412 aa).

The chain crosses the membrane as a helical; Signal-anchor for type II membrane protein span at residues 1–21; it reads MKIHSCLSAILLFLFFSASSA. Residues 22-412 lie on the Lumenal side of the membrane; the sequence is KQNVRTERIS…AGPVADLKPW (391 aa). N139 and N400 each carry an N-linked (GlcNAc...) asparagine glycan.

This sequence belongs to the glycosyltransferase 47 family. Limited to xylem cells. Expressed in the root tip, xylem cells of roots, and in the vasculature of roots, cotyledons and leaves.

The protein localises to the golgi apparatus membrane. In terms of biological role, involved in the synthesis of the hemicellulose glucuronoxylan, a major component of secondary cell walls. Probably involved in the elongation of glucuronoxylan xylosyl backbone, especially in the formation of GlcUA side chain of xylans. The protein is Probable beta-1,4-xylosyltransferase IRX10 (IRX10) of Arabidopsis thaliana (Mouse-ear cress).